We begin with the raw amino-acid sequence, 232 residues long: Large ribosomal subunit protein uL1 (232 aa).

This sequence belongs to the universal ribosomal protein uL1 family. In terms of assembly, part of the 50S ribosomal subunit.

In terms of biological role, binds directly to 23S rRNA. The L1 stalk is quite mobile in the ribosome, and is involved in E site tRNA release. Its function is as follows. Protein L1 is also a translational repressor protein, it controls the translation of the L11 operon by binding to its mRNA. The protein is Large ribosomal subunit protein uL1 of Burkholderia cenocepacia (strain HI2424).